A 405-amino-acid chain; its full sequence is Tryptophan synthase beta chain (405 aa).

The residue at position 95 (Lys95) is an N6-(pyridoxal phosphate)lysine.

This sequence belongs to the TrpB family. In terms of assembly, tetramer of two alpha and two beta chains. Pyridoxal 5'-phosphate is required as a cofactor.

It catalyses the reaction (1S,2R)-1-C-(indol-3-yl)glycerol 3-phosphate + L-serine = D-glyceraldehyde 3-phosphate + L-tryptophan + H2O. The protein operates within amino-acid biosynthesis; L-tryptophan biosynthesis; L-tryptophan from chorismate: step 5/5. In terms of biological role, the beta subunit is responsible for the synthesis of L-tryptophan from indole and L-serine. The polypeptide is Tryptophan synthase beta chain (Pseudomonas putida (strain W619)).